The sequence spans 303 residues: Enoyl-CoA hydratase domain-containing protein 3, mitochondrial (303 aa).

A mitochondrion-targeting transit peptide spans 1-17; sequence MAAVAVLRAFGASGPMC. The residue at position 110 (Lys110) is an N6-succinyllysine.

This sequence belongs to the enoyl-CoA hydratase/isomerase family. In terms of tissue distribution, expressed in adipocytes. Expressed in blood cells, with higher expression in patients with low coronary lesions.

The protein resides in the mitochondrion. May play a role in fatty acid biosynthesis and insulin sensitivity. The polypeptide is Enoyl-CoA hydratase domain-containing protein 3, mitochondrial (Homo sapiens (Human)).